Consider the following 957-residue polypeptide: Atromentin synthetase (957 aa).

Residues 59–464 are adenylation (A) domain; sequence SVQARTFQDF…SGRIKDTVIV (406 aa). The Carrier domain occupies 596 to 674; it reads TPSTDDEKAL…DLAKYVNGLV (79 aa). Positions 601-671 are thiolation and peptide carrier (T) domain; the sequence is DEKALAAIYA…IVSDLAKYVN (71 aa). O-(pantetheine 4'-phosphoryl)serine is present on S633. The segment at 697–947 is thioesterase (TE) domain; the sequence is PIFFVHPGVG…FDHVPQFQKI (251 aa).

This sequence belongs to the ATP-dependent AMP-binding enzyme family.

The protein operates within secondary metabolite biosynthesis. Its function is as follows. The L-tyrosine:2-oxoglutarate aminotransferase atrD and the atromentin synthetase atrA catalyze consecutive steps to turn over L-tyrosine into atromentin, which represents the generic precursor molecule for the entire terphenylquinone and pulvinic acid family of pigments, which are widely distributed secondary metabolites in homobasidiomycetes. The first step is catalyzed by atrD which converts L-tyrosine in to 4-hydroxyphenylpyruvate (4-HPP). Adenylation of two 4-HPP monomers by the atrA adenylation (A) domain, ester bond formation between monomers and atrA, and symmetric C-C-bond formation between two monomers by atrA leads to atromentin. This Tapinella panuoides (Oyster rollrim mushroom) protein is Atromentin synthetase.